The following is a 125-amino-acid chain: Protein MGF 360-9L (125 aa).

The protein belongs to the asfivirus MGF 360 family. In terms of assembly, interacts with host STAT1; this interaction mediates STAT1 degradation through apoptosis. Interacts with host STAT2; this interaction mediates STAT2 degradation through the proteasome.

The protein resides in the host cytoplasm. Plays a role in virus cell tropism, and may be required for efficient virus replication in macrophages. In addition, inhibits IFN-beta-induced IFN-stimulated genes (ISGs) transcription. Mechanistically, degrades host STAT1 and STAT2 through apoptosis and ubiquitin-proteasome pathways respectively. This chain is Protein MGF 360-9L, found in African swine fever virus (strain Badajoz 1971 Vero-adapted) (Ba71V).